A 133-amino-acid chain; its full sequence is Ribosome-binding factor A (133 aa).

The protein belongs to the RbfA family. In terms of assembly, monomer. Binds 30S ribosomal subunits, but not 50S ribosomal subunits or 70S ribosomes.

It localises to the cytoplasm. In terms of biological role, one of several proteins that assist in the late maturation steps of the functional core of the 30S ribosomal subunit. Associates with free 30S ribosomal subunits (but not with 30S subunits that are part of 70S ribosomes or polysomes). Required for efficient processing of 16S rRNA. May interact with the 5'-terminal helix region of 16S rRNA. In Enterobacter sp. (strain 638), this protein is Ribosome-binding factor A.